We begin with the raw amino-acid sequence, 1232 residues long: MRRYRIDSMKYEQRMNAGASGFDMSDWNNPYNASPPSSRGGDDDASSVNHSRPRRSRLDNDIPQPRRPILIQPARPVSQKSNRQGTGMSNGSRGLNSTFNGYDRTYSRYHQNSSRGPSEGFSGAPSARNASGYASDYANSRAGVGLLPNNHREPVRPRSTAAERYANASSMRNGFVYDSGESDKTSEELEEDEEEEEVRNFYMEGRAQGSRSVTNTLASEVYNSESESYYYGVVKLGSAIVDHVFRTMPPPEKYYKMPPIDRVAYVFYCAVNNKPYNNIDEFHVIFNREFYSYRGYGDSKDLALFKVCKRMQEEFSLKQLEADRLAYEKARQEAAESEKLDFNQHKIEEREEPKLNISQPEEVLSNGPLHYHSCLQFATIGVGGKLVIIKPAGTIDSITGHVLSTSSVHVDDLKTFLHFDEQSGKVIESVQNFKGPLIAGQTPTHSVRLYIQRQIDALRQIRNAGDVKKSEVVDALLVWQLLEIMVQQHGRVTGPDVATLLTNASEELGEKTGISSNGTSESGSKFEAKERFNKYLLGGHINEAVESAITDGLYADAMTLIRRLHPNDAKKIEEIEARFMNLRSIDDPFATLVAVSSDQPPPILTNSAFDDDNNWKRHAAIVLANLNSQTAMQTIYHLGLLLAKRERNCAADFCLLVVCILAGYDPFIPVAHDGDETSRKHIGLVHSGSNLLNRVDGLSGTAGFSFTDLHATDIFDYALRLGNNNVDSPLAKSIDYQLARIEYAKKLSSFGGFATDAFRYCTEVARSLWMYVAAFDKNAMFDLCDLAESLQYMAAATPDESGWITTMRGMLGAAPVQESQQHVPQPQPVENKSISSEAKKWHDEHQAPLEIGSRNDQQHNDKTVEKPIAPGRASLPPPTLVTESSSESTFTDKSDSSVTVAASASRTSTLTSSTLPPPPSLPKTIEKPISTPPPISKNVVPEMTPPAIVKPPMPTLSMPIPPVSTPIMVSPQPIPIPKPVDASIAKSPRSELDDLWDTSPPSNQTSYPPAPRNIQPSYSPAPNFANPTAPSVPTPPPAVSSAPVLQQATLGQASIPNAKTTAPPVPQKQPELALNERKASKGWFGSIKEKVIKSIPSANQMILPDDSKPSIVWDPVQKRYVGAGVEEEVVAAPPPVMSAPHLMGGGPDSNKSSTNSLRSARSGVGSRYLQSGMATSQAPAMDTGMPPMMPPTMPMSFSFMPAPTEDDSSEYVDPFSGEPTAPSESLSKQNND.

Disordered stretches follow at residues 18–134, 172–193, 815–843, 866–942, 972–1069, and 1140–1232; these read GASG…SGYA, RNGF…EEDE, PVQE…KWHD, KPIA…VVPE, QPIP…PQKQ, and PHLM…QNND. Residues 26 to 37 show a composition bias toward polar residues; it reads DWNNPYNASPPS. Over residues 67–76 the composition is skewed to low complexity; sequence RPILIQPARP. Positions 78 to 100 are enriched in polar residues; that stretch reads SQKSNRQGTGMSNGSRGLNSTFN. Positions 817 to 836 are enriched in polar residues; it reads QESQQHVPQPQPVENKSISS. Low complexity predominate over residues 896–914; the sequence is SSVTVAASASRTSTLTSST. Polar residues-rich tracts occupy residues 1046–1060, 1149–1159, and 1168–1178; these read QQAT…NAKT, SNKSSTNSLRS, and YLQSGMATSQA. Over residues 1194–1203 the composition is skewed to low complexity; that stretch reads PMSFSFMPAP. Positions 1222-1232 are enriched in polar residues; it reads PSESLSKQNND.

This sequence belongs to the SEC16 family. In terms of assembly, interacts with tfg-1 (via N-terminus); the interaction is direct and is required for both the localization of tfg-1 and to maintain the distribution of sec-16A.1 at endoplasmic reticulum exit sites (ERES).

It localises to the endoplasmic reticulum. The protein resides in the endoplasmic reticulum-Golgi intermediate compartment. In terms of biological role, plays a role in the organization of the endoplasmic reticulum exit sites (ERES), also known as transitional endoplasmic reticulum (tER). In association with tfg-1, accumulates at ERES to positively regulate secretory cargo trafficking from the endoplasmic reticulum to the endoplasmic reticulum-Golgi intermediate compartment (ERGIC) and Golgi apparatus. This is Protein transport protein sec-16A.1 from Caenorhabditis elegans.